Reading from the N-terminus, the 438-residue chain is Dol-P-Man:Man(5)GlcNAc(2)-PP-Dol alpha-1,3-mannosyltransferase (438 aa).

Ser-13 bears the Phosphoserine mark. A run of 11 helical transmembrane segments spans residues 41-61, 95-115, 123-143, 149-169, 172-192, 203-223, 231-251, 289-309, 332-352, 356-376, and 407-427; these read YTLL…FWVI, TGPL…FYAT, MAQN…FLIY, VPPF…SIFV, LFND…FLAQ, LAVS…FLLL, ALPK…PFLL, FHLA…LCRW, ALTP…GICF, LHYQ…WAMP, and AALH…PESF.

Belongs to the glycosyltransferase ALG3 family.

Its subcellular location is the endoplasmic reticulum membrane. It carries out the reaction an alpha-D-Man-(1-&gt;2)-alpha-D-Man-(1-&gt;2)-alpha-D-Man-(1-&gt;3)-[alpha-D-Man-(1-&gt;6)]-beta-D-Man-(1-&gt;4)-beta-D-GlcNAc-(1-&gt;4)-alpha-D-GlcNAc-diphospho-di-trans,poly-cis-dolichol + a di-trans,poly-cis-dolichyl beta-D-mannosyl phosphate = an alpha-D-Man-(1-&gt;2)-alpha-D-Man-(1-&gt;2)-alpha-D-Man-(1-&gt;3)-[alpha-D-Man-(1-&gt;3)-alpha-D-Man-(1-&gt;6)]-beta-D-Man-(1-&gt;4)-beta-D-GlcNAc-(1-&gt;4)-alpha-D-GlcNAc-diphospho-di-trans,poly-cis-dolichol + a di-trans,poly-cis-dolichyl phosphate + H(+). The protein operates within protein modification; protein glycosylation. Functionally, dol-P-Man:Man(5)GlcNAc(2)-PP-Dol alpha-1,3-mannosyltransferase that operates in the biosynthetic pathway of dolichol-linked oligosaccharides, the glycan precursors employed in protein asparagine (N)-glycosylation. The assembly of dolichol-linked oligosaccharides begins on the cytosolic side of the endoplasmic reticulum membrane and finishes in its lumen. The sequential addition of sugars to dolichol pyrophosphate produces dolichol-linked oligosaccharides containing fourteen sugars, including two GlcNAcs, nine mannoses and three glucoses. Once assembled, the oligosaccharide is transferred from the lipid to nascent proteins by oligosaccharyltransferases. In the lumen of the endoplasmic reticulum, adds the first dolichyl beta-D-mannosyl phosphate derived mannose in an alpha-1,3 linkage to Man(5)GlcNAc(2)-PP-dolichol to produce Man(6)GlcNAc(2)-PP-dolichol. Man(6)GlcNAc(2)-PP-dolichol is a substrate for ALG9, the following enzyme in the biosynthetic pathway. This Mus musculus (Mouse) protein is Dol-P-Man:Man(5)GlcNAc(2)-PP-Dol alpha-1,3-mannosyltransferase.